A 176-amino-acid chain; its full sequence is MEVKATTILAVRRDGKTAVGGDGQVTLGSSVIKHTARKIRKLYKGQVIVGFAGSAADGLALMERLEAKLEEYRGNLLKASVQLAKDWRMDKYLRRLEALLLAVDREHMLLISGNGDIIEPDEPVLAIGSGGDYARAAALALYRNTDLSAREIVEKSLKIASEICIYTNDKFVIEEI.

T6 is a catalytic residue. The Na(+) site is built by S161, C164, and T167.

Belongs to the peptidase T1B family. HslV subfamily. As to quaternary structure, a double ring-shaped homohexamer of HslV is capped on each side by a ring-shaped HslU homohexamer. The assembly of the HslU/HslV complex is dependent on binding of ATP.

Its subcellular location is the cytoplasm. It catalyses the reaction ATP-dependent cleavage of peptide bonds with broad specificity.. Its activity is regulated as follows. Allosterically activated by HslU binding. Protease subunit of a proteasome-like degradation complex believed to be a general protein degrading machinery. This chain is ATP-dependent protease subunit HslV, found in Aquifex aeolicus (strain VF5).